Here is a 214-residue protein sequence, read N- to C-terminus: Adenylate kinase (214 aa).

10 to 15 (GAGKGT) lines the ATP pocket. Positions 30 to 59 (STGDMLRAAIKAGTELGKQAKAVIDAGQLV) are NMP. Residues threonine 31, arginine 36, 57–59 (QLV), 85–88 (GFPR), and glutamine 92 each bind AMP. The interval 122–159 (GRRAHLPSGRTYHVVYNPPKVEGKDDVTGEDLVVRDDD) is LID. ATP is bound by residues arginine 123 and 132-133 (TY). AMP contacts are provided by arginine 156 and arginine 167. Position 200 (lysine 200) interacts with ATP.

It belongs to the adenylate kinase family. As to quaternary structure, monomer.

The protein resides in the cytoplasm. It carries out the reaction AMP + ATP = 2 ADP. Its pathway is purine metabolism; AMP biosynthesis via salvage pathway; AMP from ADP: step 1/1. Its function is as follows. Catalyzes the reversible transfer of the terminal phosphate group between ATP and AMP. Plays an important role in cellular energy homeostasis and in adenine nucleotide metabolism. In Vibrio campbellii (strain ATCC BAA-1116), this protein is Adenylate kinase.